A 206-amino-acid polypeptide reads, in one-letter code: Guanylate kinase (206 aa).

The Guanylate kinase-like domain occupies 6–184 (GTLYIISAPS…ALDDLKAIFR (179 aa)). Residue 13–20 (APSGAGKS) coordinates ATP.

This sequence belongs to the guanylate kinase family.

Its subcellular location is the cytoplasm. It carries out the reaction GMP + ATP = GDP + ADP. In terms of biological role, essential for recycling GMP and indirectly, cGMP. This Pseudomonas fluorescens (strain Pf0-1) protein is Guanylate kinase.